The following is a 148-amino-acid chain: Putative cyclin-dependent kinase inhibitor SPL2 (148 aa).

A phosphoserine mark is found at Ser59 and Ser86.

The protein localises to the cytoplasmic granule. It is found in the cytoplasm. Functionally, putative cyclin-dependent kinase (CDK) inhibitor necessary and sufficient for PHO pathway-dependent down-regulation of low-affinity phosphate transport. This chain is Putative cyclin-dependent kinase inhibitor SPL2 (SPL2), found in Saccharomyces cerevisiae (strain YJM789) (Baker's yeast).